The following is a 66-amino-acid chain: Conotoxin TsMEKL-03 (66 aa).

The signal sequence occupies residues 1 to 9 (VILLMSTQA). A propeptide spanning residues 10-38 (LIQSGVEKRSNKIKALSKRKTTAESWWEG) is cleaved from the precursor. Cystine bridges form between cysteine 40-cysteine 54, cysteine 47-cysteine 58, and cysteine 53-cysteine 63.

The protein belongs to the conotoxin O2 superfamily. As to expression, expressed by the venom duct.

Its subcellular location is the secreted. The chain is Conotoxin TsMEKL-03 from Conus tessulatus (Tessellate cone).